A 138-amino-acid polypeptide reads, in one-letter code: Large ribosomal subunit protein uL16 (138 aa).

Basic residues predominate over residues Met1–Gln17. Positions Met1 to Gly24 are disordered.

The protein belongs to the universal ribosomal protein uL16 family. As to quaternary structure, part of the 50S ribosomal subunit.

In terms of biological role, binds 23S rRNA and is also seen to make contacts with the A and possibly P site tRNAs. This chain is Large ribosomal subunit protein uL16, found in Mycobacterium ulcerans (strain Agy99).